Here is a 357-residue protein sequence, read N- to C-terminus: Beta-hexosaminidase (357 aa).

Substrate contacts are provided by residues aspartate 72, arginine 80, arginine 146, and lysine 176 to histidine 177. Histidine 189 functions as the Proton donor/acceptor in the catalytic mechanism. Aspartate 260 (nucleophile) is an active-site residue.

The protein belongs to the glycosyl hydrolase 3 family. NagZ subfamily.

It localises to the cytoplasm. It catalyses the reaction Hydrolysis of terminal non-reducing N-acetyl-D-hexosamine residues in N-acetyl-beta-D-hexosaminides.. It participates in cell wall biogenesis; peptidoglycan recycling. Its function is as follows. Plays a role in peptidoglycan recycling by cleaving the terminal beta-1,4-linked N-acetylglucosamine (GlcNAc) from peptide-linked peptidoglycan fragments, giving rise to free GlcNAc, anhydro-N-acetylmuramic acid and anhydro-N-acetylmuramic acid-linked peptides. This Hydrogenovibrio crunogenus (strain DSM 25203 / XCL-2) (Thiomicrospira crunogena) protein is Beta-hexosaminidase.